A 316-amino-acid chain; its full sequence is Pantothenate kinase (316 aa).

95-102 (GSVAVGKS) provides a ligand contact to ATP.

It belongs to the prokaryotic pantothenate kinase family.

Its subcellular location is the cytoplasm. It carries out the reaction (R)-pantothenate + ATP = (R)-4'-phosphopantothenate + ADP + H(+). Its pathway is cofactor biosynthesis; coenzyme A biosynthesis; CoA from (R)-pantothenate: step 1/5. In Shewanella putrefaciens (strain CN-32 / ATCC BAA-453), this protein is Pantothenate kinase.